A 198-amino-acid polypeptide reads, in one-letter code: Recombination protein RecR (198 aa).

The segment at 57-72 (CSVCGHITENDPCYIC) adopts a C4-type zinc-finger fold. The region spanning 80 to 175 (SVICVVEDDK…KVTRLAQGLS (96 aa)) is the Toprim domain.

The protein belongs to the RecR family.

Functionally, may play a role in DNA repair. It seems to be involved in an RecBC-independent recombinational process of DNA repair. It may act with RecF and RecO. The sequence is that of Recombination protein RecR from Staphylococcus aureus (strain MSSA476).